We begin with the raw amino-acid sequence, 227 residues long: 2,3-bisphosphoglycerate-dependent phosphoglycerate mutase (227 aa).

Substrate is bound by residues 7-14 (RHGQSEWN), 20-21 (TG), arginine 59, 86-89 (ERHY), lysine 97, 113-114 (RR), and 182-183 (GN). Histidine 8 (tele-phosphohistidine intermediate) is an active-site residue. Glutamate 86 (proton donor/acceptor) is an active-site residue.

This sequence belongs to the phosphoglycerate mutase family. BPG-dependent PGAM subfamily. Homodimer.

It catalyses the reaction (2R)-2-phosphoglycerate = (2R)-3-phosphoglycerate. The protein operates within carbohydrate degradation; glycolysis; pyruvate from D-glyceraldehyde 3-phosphate: step 3/5. Catalyzes the interconversion of 2-phosphoglycerate and 3-phosphoglycerate. In Neisseria meningitidis serogroup C / serotype 2a (strain ATCC 700532 / DSM 15464 / FAM18), this protein is 2,3-bisphosphoglycerate-dependent phosphoglycerate mutase.